The sequence spans 227 residues: Cleavage and polyadenylation specificity factor subunit 5 (227 aa).

At Ser-2 the chain carries N-acetylserine. The tract at residues Ser-2–Asn-147 is necessary for RNA-binding. At Arg-15 the chain carries Omega-N-methylarginine. 2 positions are modified to N6-acetyllysine: Lys-23 and Lys-29. Tyr-40 is subject to Phosphotyrosine. An N6-acetyllysine modification is found at Lys-56. The Nudix hydrolase domain maps to Met-76–Leu-201. Residues Glu-81 to Tyr-160 form a necessary for interactions with PAPOLA and PABPN1 region. The interaction with RNA stretch occupies residues Thr-102–Phe-104. The Nudix box motif lies at Gly-109–Gly-130.

This sequence belongs to the Nudix hydrolase family. CPSF5 subfamily. In terms of assembly, homodimer (via N- and C-terminus); binds RNA as homodimer. Component of the cleavage factor Im (CFIm) complex which is a heterotetramer composed of two subunits of NUDT21/CPSF5 and two subunits of CPSF6 or CPSF7 or a heterodimer of CPSF6 and CPSF7. The cleavage factor Im (CFIm) complex associates with the CPSF and CSTF complexes to promote the assembly of the core mRNA 3'-processing machinery. Interacts with CPSF6 (via the RRM domain); this interaction is direct and enhances binding to RNA. Interacts with CPSF7. Interacts with FIP1L1; this interaction occurs in a RNA sequence-specific manner. Interacts with PABPN1. Interacts (via N-terminus) with PAPOLA (via C-terminus); this interaction is direct and diminished by acetylation. Interacts with SNRNP70. Interacts with VIRMA. Acetylated mainly by p300/CBP, recruited to the complex by CPSF6. Acetylation decreases interaction with PAPAO. Deacetylated by the class I/II HDACs, HDAC1, HDAC3 and HDAC10, and by the class III HDACs, SIRT1 and SIRT2. Expressed in testis. Expressed in male germ cells (at protein level).

It localises to the nucleus. The protein localises to the cytoplasm. Component of the cleavage factor Im (CFIm) complex that functions as an activator of the pre-mRNA 3'-end cleavage and polyadenylation processing required for the maturation of pre-mRNA into functional mRNAs. CFIm contributes to the recruitment of multiprotein complexes on specific sequences on the pre-mRNA 3'-end, so called cleavage and polyadenylation signals (pA signals). Most pre-mRNAs contain multiple pA signals, resulting in alternative cleavage and polyadenylation (APA) producing mRNAs with variable 3'-end formation. The CFIm complex acts as a key regulator of cleavage and polyadenylation site choice during APA through its binding to 5'-UGUA-3' elements localized in the 3'-untranslated region (UTR) for a huge number of pre-mRNAs. NUDT21/CPSF5 activates indirectly the mRNA 3'-processing machinery by recruiting CPSF6 and/or CPSF7. Binds to 5'-UGUA-3' elements localized upstream of pA signals that act as enhancers of pre-mRNA 3'-end processing. The homodimer mediates simultaneous sequence-specific recognition of two 5'-UGUA-3' elements within the pre-mRNA. Plays a role in somatic cell fate transitions and pluripotency by regulating widespread changes in gene expression through an APA-dependent function. Binds to chromatin. Binds to, but does not hydrolyze mono- and di-adenosine nucleotides. In Mus musculus (Mouse), this protein is Cleavage and polyadenylation specificity factor subunit 5.